The sequence spans 205 residues: ATP-dependent dethiobiotin synthetase BioD (205 aa).

T16 contributes to the Mg(2+) binding site. K32 is a catalytic residue. Substrate is bound at residue T36. E97 provides a ligand contact to Mg(2+). ATP is bound at residue E97 to G100.

It belongs to the dethiobiotin synthetase family. Homodimer. Requires Mg(2+) as cofactor.

It is found in the cytoplasm. It catalyses the reaction (7R,8S)-7,8-diammoniononanoate + CO2 + ATP = (4R,5S)-dethiobiotin + ADP + phosphate + 3 H(+). Its pathway is cofactor biosynthesis; biotin biosynthesis; biotin from 7,8-diaminononanoate: step 1/2. Its function is as follows. Catalyzes a mechanistically unusual reaction, the ATP-dependent insertion of CO2 between the N7 and N8 nitrogen atoms of 7,8-diaminopelargonic acid (DAPA, also called 7,8-diammoniononanoate) to form a ureido ring. This Paramagnetospirillum magneticum (strain ATCC 700264 / AMB-1) (Magnetospirillum magneticum) protein is ATP-dependent dethiobiotin synthetase BioD.